We begin with the raw amino-acid sequence, 419 residues long: Tyrosine--tRNA ligase (419 aa).

L-tyrosine is bound at residue Y34. The 'HIGH' region motif lies at P39–N48. 2 residues coordinate L-tyrosine: Y169 and Q173. A 'KMSKS' region motif is present at residues K229–S233. Position 232 (K232) interacts with ATP. The 67-residue stretch at L353–Y419 folds into the S4 RNA-binding domain.

This sequence belongs to the class-I aminoacyl-tRNA synthetase family. TyrS type 1 subfamily. In terms of assembly, homodimer.

The protein localises to the cytoplasm. The catalysed reaction is tRNA(Tyr) + L-tyrosine + ATP = L-tyrosyl-tRNA(Tyr) + AMP + diphosphate + H(+). Catalyzes the attachment of tyrosine to tRNA(Tyr) in a two-step reaction: tyrosine is first activated by ATP to form Tyr-AMP and then transferred to the acceptor end of tRNA(Tyr). This is Tyrosine--tRNA ligase from Lactococcus lactis subsp. cremoris (strain MG1363).